A 438-amino-acid chain; its full sequence is UDP-N-acetylmuramoylalanine--D-glutamate ligase (438 aa).

Residue 112–118 coordinates ATP; the sequence is GSNGKST.

It belongs to the MurCDEF family.

Its subcellular location is the cytoplasm. It carries out the reaction UDP-N-acetyl-alpha-D-muramoyl-L-alanine + D-glutamate + ATP = UDP-N-acetyl-alpha-D-muramoyl-L-alanyl-D-glutamate + ADP + phosphate + H(+). The protein operates within cell wall biogenesis; peptidoglycan biosynthesis. Cell wall formation. Catalyzes the addition of glutamate to the nucleotide precursor UDP-N-acetylmuramoyl-L-alanine (UMA). The chain is UDP-N-acetylmuramoylalanine--D-glutamate ligase from Shigella boydii serotype 4 (strain Sb227).